We begin with the raw amino-acid sequence, 880 residues long: Leucine--tRNA ligase (880 aa).

The 'HIGH' region signature appears at 46-56 (PYPSGALHMGH). The 'KMSKS' region motif lies at 638–642 (KMSKS). Residue Lys641 coordinates ATP.

Belongs to the class-I aminoacyl-tRNA synthetase family.

Its subcellular location is the cytoplasm. It catalyses the reaction tRNA(Leu) + L-leucine + ATP = L-leucyl-tRNA(Leu) + AMP + diphosphate. This is Leucine--tRNA ligase from Xanthomonas euvesicatoria pv. vesicatoria (strain 85-10) (Xanthomonas campestris pv. vesicatoria).